A 160-amino-acid polypeptide reads, in one-letter code: Class B acid phosphatase (160 aa).

The signal sequence occupies residues 1–23 (MRKVTLTLSAIALALSLNGAAMA). The active-site Nucleophile is the Asp69. Mg(2+) contacts are provided by Asp69 and Asp71. Asp71 serves as the catalytic Proton donor. 137 to 138 (TG) serves as a coordination point for substrate.

The protein belongs to the class B bacterial acid phosphatase family. Homotetramer. Mg(2+) is required as a cofactor.

The protein resides in the periplasm. It catalyses the reaction a phosphate monoester + H2O = an alcohol + phosphate. In terms of biological role, dephosphorylates several organic phosphate monoesters. Also has a phosphotransferase activity catalyzing the transfer of low-energy phosphate groups from organic phosphate monoesters to free hydroxyl groups of various organic compounds. This Proteus mirabilis protein is Class B acid phosphatase (aphA).